Consider the following 202-residue polypeptide: dITP/XTP pyrophosphatase (202 aa).

Residue 10-15 (TSNRHK) coordinates substrate. Aspartate 70 functions as the Proton acceptor in the catalytic mechanism. Aspartate 70 contacts Mg(2+). Substrate contacts are provided by residues serine 71, 153 to 156 (FGYD), lysine 176, and 181 to 182 (HR).

It belongs to the HAM1 NTPase family. As to quaternary structure, homodimer. It depends on Mg(2+) as a cofactor.

It catalyses the reaction XTP + H2O = XMP + diphosphate + H(+). The catalysed reaction is dITP + H2O = dIMP + diphosphate + H(+). It carries out the reaction ITP + H2O = IMP + diphosphate + H(+). Functionally, pyrophosphatase that catalyzes the hydrolysis of nucleoside triphosphates to their monophosphate derivatives, with a high preference for the non-canonical purine nucleotides XTP (xanthosine triphosphate), dITP (deoxyinosine triphosphate) and ITP. Seems to function as a house-cleaning enzyme that removes non-canonical purine nucleotides from the nucleotide pool, thus preventing their incorporation into DNA/RNA and avoiding chromosomal lesions. This chain is dITP/XTP pyrophosphatase, found in Methylacidiphilum infernorum (isolate V4) (Methylokorus infernorum (strain V4)).